Here is a 239-residue protein sequence, read N- to C-terminus: Large ribosomal subunit protein uL30 (239 aa).

The tract at residues 1–37 is disordered; the sequence is MSKFVPENVQKKLARDEKLRKAKAEQRKASSAQMKQR. Over residues 9–28 the composition is skewed to basic and acidic residues; the sequence is VQKKLARDEKLRKAKAEQRK.

It belongs to the universal ribosomal protein uL30 family.

This is Large ribosomal subunit protein uL30 (RPL7) from Tetrahymena thermophila.